The sequence spans 113 residues: Ribonuclease P protein component (113 aa).

It belongs to the RnpA family. Consists of a catalytic RNA component (M1 or rnpB) and a protein subunit.

It catalyses the reaction Endonucleolytic cleavage of RNA, removing 5'-extranucleotides from tRNA precursor.. In terms of biological role, RNaseP catalyzes the removal of the 5'-leader sequence from pre-tRNA to produce the mature 5'-terminus. It can also cleave other RNA substrates such as 4.5S RNA. The protein component plays an auxiliary but essential role in vivo by binding to the 5'-leader sequence and broadening the substrate specificity of the ribozyme. This is Ribonuclease P protein component from Ligilactobacillus salivarius (strain UCC118) (Lactobacillus salivarius).